The sequence spans 21 residues: Magainin-B1 (21 aa).

As to expression, expressed by the skin glands.

Its subcellular location is the secreted. Functionally, has no antimicrobial activity against tested bacteria. The sequence is that of Magainin-B1 from Xenopus borealis (Kenyan clawed frog).